Reading from the N-terminus, the 548-residue chain is (S)-beta-macrocarpene synthase (548 aa).

Mg(2+)-binding residues include aspartate 302 and aspartate 306. Residues aspartate 302, aspartate 306, arginine 443, and asparagine 446 each contribute to the substrate site. Positions 302–306 match the DDXXD motif motif; the sequence is DDTLD. The Mg(2+) site is built by asparagine 446, serine 450, and glutamate 454.

This sequence belongs to the terpene synthase family. As to quaternary structure, monomer. Requires Mg(2+) as cofactor. Mn(2+) is required as a cofactor. In terms of tissue distribution, expressed in roots. Not detected in leaves, unless damaged by herbivory or infected by fungi.

The protein resides in the cytoplasm. It catalyses the reaction (S)-beta-bisabolene = (S)-beta-macrocarpene. The catalysed reaction is (2E,6E)-farnesyl diphosphate = (S)-beta-bisabolene + diphosphate. It carries out the reaction (2E)-geranyl diphosphate = (4S)-limonene + diphosphate. The enzyme catalyses (2E)-geranyl diphosphate = beta-myrcene + diphosphate. It catalyses the reaction (2E)-geranyl diphosphate = terpinolene + diphosphate. The catalysed reaction is (2E)-geranyl diphosphate + H2O = (S)-linalool + diphosphate. It functions in the pathway secondary metabolite biosynthesis; terpenoid biosynthesis. Its function is as follows. Involved in the biosynthesis of the bicyclic sesquiterpene (S)-beta-macrocarpene. Can use both geranyl diphosphate and farnesyl diphosphate as substrate, but not geranylgeranyl diphosphate. Produces mainly (S)-beta-macrocarpene, but also smaller amounts of beta-bisabolene and (E)-beta-farnesene when used with farnesyl diphosphate as substrate. In the presence of geranyl diphosphate, produces the acyclic monoterpenes beta-myrcene and linalool along with minor amounts of the cyclic compounds limonene, alpha-thujene, sabinene and alpha-terpinolene. May be involved in plant defense. This Zea mays (Maize) protein is (S)-beta-macrocarpene synthase.